The primary structure comprises 474 residues: ATP synthase subunit beta 2 (474 aa).

153–160 (GGAGVGKT) is a binding site for ATP.

Belongs to the ATPase alpha/beta chains family. In terms of assembly, F-type ATPases have 2 components, CF(1) - the catalytic core - and CF(0) - the membrane proton channel. CF(1) has five subunits: alpha(3), beta(3), gamma(1), delta(1), epsilon(1). CF(0) has three main subunits: a(1), b(2) and c(9-12). The alpha and beta chains form an alternating ring which encloses part of the gamma chain. CF(1) is attached to CF(0) by a central stalk formed by the gamma and epsilon chains, while a peripheral stalk is formed by the delta and b chains.

The protein localises to the cell inner membrane. It catalyses the reaction ATP + H2O + 4 H(+)(in) = ADP + phosphate + 5 H(+)(out). Functionally, produces ATP from ADP in the presence of a proton gradient across the membrane. The catalytic sites are hosted primarily by the beta subunits. This Syntrophotalea carbinolica (strain DSM 2380 / NBRC 103641 / GraBd1) (Pelobacter carbinolicus) protein is ATP synthase subunit beta 2.